The sequence spans 177 residues: Deoxyuridine 5'-triphosphate nucleotidohydrolase (177 aa).

Substrate is bound by residues 83-85, asparagine 96, 100-102, and lysine 110; these read RSG and TID. Over residues 150-163 the composition is skewed to polar residues; that stretch reads DLTSSQTDLSNQPN. A disordered region spans residues 150 to 177; it reads DLTSSQTDLSNQPNTGRGTGGFGSTGQK. Positions 166-177 are enriched in gly residues; the sequence is RGTGGFGSTGQK.

The protein belongs to the dUTPase family. Mg(2+) is required as a cofactor.

It carries out the reaction dUTP + H2O = dUMP + diphosphate + H(+). It functions in the pathway pyrimidine metabolism; dUMP biosynthesis; dUMP from dCTP (dUTP route): step 2/2. Functionally, this enzyme is involved in nucleotide metabolism: it produces dUMP, the immediate precursor of thymidine nucleotides and it decreases the intracellular concentration of dUTP so that uracil cannot be incorporated into DNA. The polypeptide is Deoxyuridine 5'-triphosphate nucleotidohydrolase (Bartonella bacilliformis (strain ATCC 35685 / KC583 / Herrer 020/F12,63)).